A 307-amino-acid polypeptide reads, in one-letter code: Transaldolase (307 aa).

The active-site Schiff-base intermediate with substrate is the lysine 125.

The protein belongs to the transaldolase family. Type 1 subfamily. In terms of assembly, homodimer.

The protein resides in the cytoplasm. It carries out the reaction D-sedoheptulose 7-phosphate + D-glyceraldehyde 3-phosphate = D-erythrose 4-phosphate + beta-D-fructose 6-phosphate. The protein operates within carbohydrate degradation; pentose phosphate pathway; D-glyceraldehyde 3-phosphate and beta-D-fructose 6-phosphate from D-ribose 5-phosphate and D-xylulose 5-phosphate (non-oxidative stage): step 2/3. In terms of biological role, transaldolase is important for the balance of metabolites in the pentose-phosphate pathway. This is Transaldolase from Pseudomonas aeruginosa (strain LESB58).